We begin with the raw amino-acid sequence, 32 residues long: Dermaseptin-DA4 (32 aa).

As to expression, expressed by the skin glands.

It localises to the secreted. The protein localises to the target cell membrane. Its function is as follows. Antimicrobial peptide with activity against Gram-negative bacteria, but not against Gram-positive bacteria. Active against E.coli (MIC=5 uM), and P.aeruginosa (MIC=40 uM). Acts by disrupting cell membranes. Is able to depolarize membranes of Gram-positive and Gram-negative bacteria. Also acts as a potent chemoattractant for human leukocytes and activates them mainly through a GPCR, possibly FPRL1 coupled to the ERK1/2 MAPK pathway. Is unstructured in water but become helical upon binding to anionic lipids. In contrast to most dermaseptins, is not structured in the presence of zwitterionic lipids. Does not show hemolytic activity. The polypeptide is Dermaseptin-DA4 (Agalychnis dacnicolor (Giant Mexican leaf frog)).